The chain runs to 172 residues: Peptide deformylase (172 aa).

Fe cation-binding residues include Cys91 and His133. Glu134 is a catalytic residue. His137 is a Fe cation binding site.

It belongs to the polypeptide deformylase family. Requires Fe(2+) as cofactor.

The catalysed reaction is N-terminal N-formyl-L-methionyl-[peptide] + H2O = N-terminal L-methionyl-[peptide] + formate. Functionally, removes the formyl group from the N-terminal Met of newly synthesized proteins. Requires at least a dipeptide for an efficient rate of reaction. N-terminal L-methionine is a prerequisite for activity but the enzyme has broad specificity at other positions. This chain is Peptide deformylase, found in Vibrio campbellii (strain ATCC BAA-1116).